A 378-amino-acid chain; its full sequence is Geraniol dehydrogenase (378 aa).

Positions 48, 75, 105, 108, 111, 119, and 179 each coordinate Zn(2+).

The protein belongs to the zinc-containing alcohol dehydrogenase family. Monomer. Zn(2+) serves as cofactor.

The enzyme catalyses (2E)-geraniol + NAD(+) = (2E)-geranial + NADH + H(+). It catalyses the reaction (2E,6E)-farnesol + NAD(+) = (2E,6E)-farnesal + NADH + H(+). Catalyzes the NAD(+)-dependent oxidation of geraniol to geranial, playing an important role in the biosynthesis of neral, an alarm pheromone. Cannot use NADP(+). Also acts as a farnesol dehydrogenase by catalyzing the oxidation of (2E,6E)-farnesol to (2E,6E)-farnesal, with lower activity compared to geraniol dehydrogenase activity. This chain is Geraniol dehydrogenase, found in Carpoglyphus lactis (Dried fruit mite).